The primary structure comprises 530 residues: TNF receptor-associated factor family protein DDB_G0272829 (530 aa).

An RING-type; degenerate zinc finger spans residues 35 to 81; the sequence is CQICEGLLISSLIPNRMKALQCINGHCFCLTCWESILEIKSECPTCR. 2 consecutive TRAF-type zinc fingers follow at residues 134–188 and 189–246; these read RHES…KQMQ and GHIL…NDND. Disordered stretches follow at residues 242-267, 391-432, and 483-530; these read NNDN…LSSS, TTTT…DNQG, and FNQL…GTSL. 3 stretches are compositionally biased toward low complexity: residues 253-267, 391-415, and 485-502; these read NNSN…LSSS, TTTT…NNNN, and QLSQ…SQSL. Residues 361–422 adopt a coiled-coil conformation; that stretch reads ILEHQQQQNQ…NNNNEDEEDD (62 aa). Residues 509–530 are compositionally biased toward polar residues; the sequence is ITINQNQNTPSNPFSIFSGTSL.

Belongs to the TNF receptor-associated factor family.

It localises to the cytoplasm. Functionally, probable adapter protein and signal transducer that links members of the tumor necrosis factor receptor family to different signaling pathways by association with the receptor cytoplasmic domain and kinases. This is TNF receptor-associated factor family protein DDB_G0272829 from Dictyostelium discoideum (Social amoeba).